A 308-amino-acid polypeptide reads, in one-letter code: Cytochrome b (308 aa).

Transmembrane regions (helical) follow at residues 1 to 21 (FGSL…LLAM), 45 to 66 (WLIR…YLHI), 81 to 101 (WNIG…GYVL), and 146 to 166 (FFAF…VHLT). Heme b is bound by residues His-51 and His-65. The heme b site is built by His-150 and His-164. Residue His-169 coordinates a ubiquinone. Transmembrane regions (helical) follow at residues 194–214 (IKDL…ALFS), 256–276 (LGGV…PLLH), and 288–308 (LSQI…WVGS).

The protein belongs to the cytochrome b family. As to quaternary structure, the cytochrome bc1 complex contains 11 subunits: 3 respiratory subunits (MT-CYB, CYC1 and UQCRFS1), 2 core proteins (UQCRC1 and UQCRC2) and 6 low-molecular weight proteins (UQCRH/QCR6, UQCRB/QCR7, UQCRQ/QCR8, UQCR10/QCR9, UQCR11/QCR10 and a cleavage product of UQCRFS1). This cytochrome bc1 complex then forms a dimer. The cofactor is heme b.

It localises to the mitochondrion inner membrane. Component of the ubiquinol-cytochrome c reductase complex (complex III or cytochrome b-c1 complex) that is part of the mitochondrial respiratory chain. The b-c1 complex mediates electron transfer from ubiquinol to cytochrome c. Contributes to the generation of a proton gradient across the mitochondrial membrane that is then used for ATP synthesis. This Corvus corax (Common raven) protein is Cytochrome b (MT-CYB).